Here is a 248-residue protein sequence, read N- to C-terminus: ATP synthase delta chain, chloroplastic (248 aa).

Residues 1 to 60 (MAALQQTPITFQSRSPPPTQIISGPTAKLSFSGGLKLPKLTIKLRSNRTSRRGGGAAGSK) constitute a chloroplast transit peptide.

It belongs to the ATPase delta chain family. In terms of assembly, F-type ATPases have 2 components, CF(1) - the catalytic core - and CF(0) - the membrane proton channel. CF(1) has five subunits: alpha(3), beta(3), gamma(1), delta(1), epsilon(1). CF(0) has three main subunits: a, b and c.

The protein localises to the plastid. Its subcellular location is the chloroplast thylakoid membrane. In terms of biological role, this protein seems to be part of the stalk that links CF(0) to CF(1). It either transmits conformational changes from CF(0) into CF(1) or is implicated in proton conduction. The chain is ATP synthase delta chain, chloroplastic (ATPD) from Nicotiana tabacum (Common tobacco).